A 319-amino-acid polypeptide reads, in one-letter code: Ribosomal RNA small subunit methyltransferase H (319 aa).

S-adenosyl-L-methionine contacts are provided by residues 37 to 39 (GGH), D56, L90, D104, and Q111.

Belongs to the methyltransferase superfamily. RsmH family.

It localises to the cytoplasm. The enzyme catalyses cytidine(1402) in 16S rRNA + S-adenosyl-L-methionine = N(4)-methylcytidine(1402) in 16S rRNA + S-adenosyl-L-homocysteine + H(+). Its function is as follows. Specifically methylates the N4 position of cytidine in position 1402 (C1402) of 16S rRNA. The chain is Ribosomal RNA small subunit methyltransferase H from Nocardioides sp. (strain ATCC BAA-499 / JS614).